The following is a 276-amino-acid chain: MAD2L1-binding protein (276 aa).

Positions 1–10 (MAASGEEDMS) are enriched in acidic residues. The disordered stretch occupies residues 1 to 30 (MAASGEEDMSELSPAAAPNLDWYEKPEETH). An interaction with MAD2L1 region spans residues 49 to 81 (PAEPFCPRDLVPVVFPGPVSQEDCCQFTCELLK).

This sequence belongs to the MAD2L1BP family. As to quaternary structure, interacts with MAD2L1.

The protein resides in the nucleus. Its subcellular location is the nucleoplasm. It is found in the cytoplasm. The protein localises to the cytoskeleton. It localises to the spindle. In terms of biological role, may function to silence the spindle checkpoint and allow mitosis to proceed through anaphase by binding MAD2L1 after it has become dissociated from the MAD2L1-CDC20 complex. This is MAD2L1-binding protein (Mad2l1bp) from Mus musculus (Mouse).